The chain runs to 209 residues: Orotate phosphoribosyltransferase (209 aa).

5-phospho-alpha-D-ribose 1-diphosphate is bound by residues arginine 96, lysine 100, histidine 102, and 122–130; that span reads EDLISTGGS. Serine 126 is a binding site for orotate.

It belongs to the purine/pyrimidine phosphoribosyltransferase family. PyrE subfamily. As to quaternary structure, homodimer. The cofactor is Mg(2+).

The enzyme catalyses orotidine 5'-phosphate + diphosphate = orotate + 5-phospho-alpha-D-ribose 1-diphosphate. The protein operates within pyrimidine metabolism; UMP biosynthesis via de novo pathway; UMP from orotate: step 1/2. In terms of biological role, catalyzes the transfer of a ribosyl phosphate group from 5-phosphoribose 1-diphosphate to orotate, leading to the formation of orotidine monophosphate (OMP). The polypeptide is Orotate phosphoribosyltransferase (Streptococcus pyogenes serotype M3 (strain ATCC BAA-595 / MGAS315)).